Reading from the N-terminus, the 236-residue chain is Ribosome assembly factor MRT4 (236 aa).

Belongs to the universal ribosomal protein uL10 family. As to quaternary structure, associates with the pre-60S ribosomal particle.

Its subcellular location is the nucleus. It is found in the nucleolus. It localises to the cytoplasm. Functionally, component of the ribosome assembly machinery. Nuclear paralog of the ribosomal protein P0, it binds pre-60S subunits at an early stage of assembly in the nucleolus, and is replaced by P0 in cytoplasmic pre-60S subunits and mature 80S ribosomes. The protein is Ribosome assembly factor MRT4 of Saccharomyces cerevisiae (strain ATCC 204508 / S288c) (Baker's yeast).